Reading from the N-terminus, the 455-residue chain is Neuronal acetylcholine receptor subunit beta-3 (455 aa).

A signal peptide spans 1 to 20 (MLCLMLCVLCWSRSDVAALG). At 21 to 229 (SVVENEDALL…VTYSFVLRRL (209 aa)) the chain is on the extracellular side. 2 N-linked (GlcNAc...) asparagine glycosylation sites follow: N48 and N163. C150 and C164 are oxidised to a cystine. 3 helical membrane-spanning segments follow: residues 230-254 (PLFY…VFYL), 262-279 (LSLS…LLVI), and 296-317 (YLLF…VINV). The Cytoplasmic segment spans residues 318–425 (HHRSSATYHP…WKFVAQVLDR (108 aa)). A helical membrane pass occupies residues 426–444 (IFLWLFLVVSVTGSVLIFT).

It belongs to the ligand-gated ion channel (TC 1.A.9) family. Acetylcholine receptor (TC 1.A.9.1) subfamily. Beta-3/CHRNB3 sub-subfamily. In terms of assembly, neuronal AChR seems to be composed of two different type of subunits: alpha and beta. CHRNB3/beta-3 subunit is only able to form functional nAChRs when co-assembled with another beta subunit. Participates in pentameric assemblies along with CHRNA4/alpha-4 and CHRNB2/beta-2 subunits and with CHRNA6/alpha-6 as well, forming stoichiometries such as (CHRNA3:CHRNB4)2:CHRNB3, (CHRNA4:CHRNB2)2:CHRNB3 or (CHRNA6:CHRNB2)2:CHRNB3. Relatively abundant in the developing retina and in the trigeminal ganglion.

The protein localises to the synaptic cell membrane. It localises to the cell membrane. It catalyses the reaction Ca(2+)(in) = Ca(2+)(out). The enzyme catalyses K(+)(in) = K(+)(out). The catalysed reaction is Na(+)(in) = Na(+)(out). Its activity is regulated as follows. Activated by a myriad of ligands such as acetylcholine, cytisine, nicotine, choline and epibatidine. Functionally, component of neuronal acetylcholine receptors (nAChRs) that function as pentameric, ligand-gated cation channels with high calcium permeability among other activities. nAChRs are excitatory neurotrasnmitter receptors formed by a collection of nAChR subunits known to mediate synaptic transmission in the nervous system and the neuromuscular junction. Each nAchR subunit confers differential attributes to channel properties, including activation, deactivation and desensitization kinetics, pH sensitivity, cation permeability, and binding to allosteric modulators. Has an accessory rather than functional role and is only able to form functional nAChRs when co-assembled with another beta subunit. Participates in pentameric assemblies along with CHRNA3, CHRNA4, CHRNA6, CHRNB2 and CHRNB4. Modulates receptor assembly and increases receptor sensitivity to nicotine when associated with CHRNB2, CHRNA4 and/or CHRNA6 as well as CHRNA3 and CHRNB4. Seems to play a role in nicotine addiction. This is Neuronal acetylcholine receptor subunit beta-3 (CHRNB3) from Gallus gallus (Chicken).